Here is a 186-residue protein sequence, read N- to C-terminus: HGPRTase-like protein 3 (186 aa).

Belongs to the purine/pyrimidine phosphoribosyltransferase family. Archaeal HPRT subfamily.

Functionally, may catalyze a purine salvage reaction, the substrate is unknown. The sequence is that of HGPRTase-like protein 3 from Haloterrigena turkmenica (strain ATCC 51198 / DSM 5511 / JCM 9101 / NCIMB 13204 / VKM B-1734 / 4k) (Halococcus turkmenicus).